We begin with the raw amino-acid sequence, 351 residues long: Serine/threonine-protein kinase mos (351 aa).

The 270-residue stretch at 71–340 (FSIDGVIGSG…ERRTDDTENL (270 aa)) folds into the Protein kinase domain. ATP-binding positions include 77-85 (IGSGGFGSV) and Lys-98. Asp-194 serves as the catalytic Proton acceptor.

The protein belongs to the protein kinase superfamily. Ser/Thr protein kinase family.

It carries out the reaction L-seryl-[protein] + ATP = O-phospho-L-seryl-[protein] + ADP + H(+). It catalyses the reaction L-threonyl-[protein] + ATP = O-phospho-L-threonyl-[protein] + ADP + H(+). Functionally, suppresses the mitotic cell cycle in oocytes, forcing them to undergo meiosis II to produce haploid gametes. Acts as a MAPK kinase kinase (MAP3K) that acts upstream of MAP kinase in oocytes. The chain is Serine/threonine-protein kinase mos from Patiria pectinifera (Starfish).